The chain runs to 864 residues: DNA mismatch repair protein MutS (864 aa).

621–628 (GPNMGGKS) contributes to the ATP binding site. The segment at 804–833 (ETGKPESPAPVASRSSKPSMQADMFAEPQP) is disordered.

Belongs to the DNA mismatch repair MutS family.

This protein is involved in the repair of mismatches in DNA. It is possible that it carries out the mismatch recognition step. This protein has a weak ATPase activity. The protein is DNA mismatch repair protein MutS of Teredinibacter turnerae (strain ATCC 39867 / T7901).